A 183-amino-acid chain; its full sequence is Ribosome rescue factor SmrB (183 aa).

Positions 98–173 constitute a Smr domain; the sequence is LDLHGLTQLQ…GDAALLVLIE (76 aa).

It belongs to the SmrB family. In terms of assembly, associates with collided ribosomes, but not with correctly translating polysomes.

In terms of biological role, acts as a ribosome collision sensor. Detects stalled/collided disomes (pairs of ribosomes where the leading ribosome is stalled and a second ribosome has collided with it) and endonucleolytically cleaves mRNA at the 5' boundary of the stalled ribosome. Stalled/collided disomes form a new interface (primarily via the 30S subunits) that binds SmrB. Cleaved mRNA becomes available for tmRNA ligation, leading to ribosomal subunit dissociation and rescue of stalled ribosomes. This is Ribosome rescue factor SmrB from Escherichia fergusonii (strain ATCC 35469 / DSM 13698 / CCUG 18766 / IAM 14443 / JCM 21226 / LMG 7866 / NBRC 102419 / NCTC 12128 / CDC 0568-73).